Here is a 189-residue protein sequence, read N- to C-terminus: UPF0301 protein RF_0044 (189 aa).

This sequence belongs to the UPF0301 (AlgH) family.

The polypeptide is UPF0301 protein RF_0044 (Rickettsia felis (strain ATCC VR-1525 / URRWXCal2) (Rickettsia azadi)).